The following is a 338-amino-acid chain: Ketol-acid reductoisomerase (NADP(+)) (338 aa).

In terms of domain architecture, KARI N-terminal Rossmann spans 1-181; the sequence is MNVFYDKDAD…GGGRAGIIET (181 aa). NADP(+) contacts are provided by residues 24 to 27, Arg-47, and Ser-52; that span reads YGSQ. The active site involves His-107. Residue Gly-133 coordinates NADP(+). In terms of domain architecture, KARI C-terminal knotted spans 182 to 327; sequence NFREETETDL…AKLRAMMPWI (146 aa). Mg(2+) is bound by residues Asp-190, Glu-194, Glu-226, and Glu-230. Ser-251 contacts substrate.

This sequence belongs to the ketol-acid reductoisomerase family. Mg(2+) serves as cofactor.

It carries out the reaction (2R)-2,3-dihydroxy-3-methylbutanoate + NADP(+) = (2S)-2-acetolactate + NADPH + H(+). The enzyme catalyses (2R,3R)-2,3-dihydroxy-3-methylpentanoate + NADP(+) = (S)-2-ethyl-2-hydroxy-3-oxobutanoate + NADPH + H(+). The protein operates within amino-acid biosynthesis; L-isoleucine biosynthesis; L-isoleucine from 2-oxobutanoate: step 2/4. It participates in amino-acid biosynthesis; L-valine biosynthesis; L-valine from pyruvate: step 2/4. Involved in the biosynthesis of branched-chain amino acids (BCAA). Catalyzes an alkyl-migration followed by a ketol-acid reduction of (S)-2-acetolactate (S2AL) to yield (R)-2,3-dihydroxy-isovalerate. In the isomerase reaction, S2AL is rearranged via a Mg-dependent methyl migration to produce 3-hydroxy-3-methyl-2-ketobutyrate (HMKB). In the reductase reaction, this 2-ketoacid undergoes a metal-dependent reduction by NADPH to yield (R)-2,3-dihydroxy-isovalerate. The polypeptide is Ketol-acid reductoisomerase (NADP(+)) (Burkholderia lata (strain ATCC 17760 / DSM 23089 / LMG 22485 / NCIMB 9086 / R18194 / 383)).